Here is a 79-residue protein sequence, read N- to C-terminus: Conotoxin ArMSGL-0121 (79 aa).

Residues 1–20 (MSRLGIMVLTLLLLVFIVTS) form the signal peptide. Positions 21–44 (HQDAGEKQATQRNAINFRWRRSFT) are excised as a propeptide. Disulfide bonds link Cys-52–Cys-64, Cys-56–Cys-73, and Cys-63–Cys-77. Position 78 is a leucine amide (Leu-78).

Belongs to the conotoxin O3 superfamily. Expressed by the venom duct.

It localises to the secreted. The protein is Conotoxin ArMSGL-0121 of Conus arenatus (Sand-dusted cone).